Consider the following 124-residue polypeptide: Large ribosomal subunit protein bL20 (124 aa).

Belongs to the bacterial ribosomal protein bL20 family.

Binds directly to 23S ribosomal RNA and is necessary for the in vitro assembly process of the 50S ribosomal subunit. It is not involved in the protein synthesizing functions of that subunit. This chain is Large ribosomal subunit protein bL20, found in Ehrlichia canis (strain Jake).